We begin with the raw amino-acid sequence, 1028 residues long: Contactin-3 (1028 aa).

The N-terminal stretch at 1-19 (MMLSWKQLILLSFIGCLAG) is a signal peptide. Ig-like C2-type domains follow at residues 32–117 (PSNS…AKLQ), 122–209 (ENFK…RVLG), 227–313 (PKIE…GRLT), 318–402 (PYWL…AELK), 408–497 (PDFS…LVVT), and 499–593 (PTRI…AELI). 5 disulfides stabilise this stretch: Cys-50–Cys-100, Cys-144–Cys-196, Cys-249–Cys-297, Cys-339–Cys-386, and Cys-431–Cys-479. Residues Asn-65 and Asn-193 are each glycosylated (N-linked (GlcNAc...) asparagine). Asn-377, Asn-468, and Asn-489 each carry an N-linked (GlcNAc...) asparagine glycan. Residues Cys-521 and Cys-577 are joined by a disulfide bond. 4 consecutive Fibronectin type-III domains span residues 600-698 (PPEN…TEEA), 703-800 (APSE…SAEE), 805-901 (APSH…TKKT), and 902-998 (PPSQ…TSMD). The tract at residues 684 to 714 (GEPSLPSEKVRTEEAAPEIAPSEVSGGGGSR) is disordered. 6 N-linked (GlcNAc...) asparagine glycosylation sites follow: Asn-765, Asn-860, Asn-895, Asn-913, Asn-931, and Asn-956. Ser-1002 is lipidated: GPI-anchor amidated serine. Residues 1003-1028 (TSAISNIHPLSGYMSVLLFFIVNALW) constitute a propeptide, removed in mature form.

This sequence belongs to the immunoglobulin superfamily. Contactin family. In terms of assembly, interacts with PTPRG. Specifically expressed in brain. Ectopically expressed in tumors expressing endogenous intracisternal A-type particles (IAPs).

The protein resides in the cell membrane. Its function is as follows. Contactins mediate cell surface interactions during nervous system development. Has some neurite outgrowth-promoting activity. The polypeptide is Contactin-3 (Cntn3) (Mus musculus (Mouse)).